A 434-amino-acid chain; its full sequence is MSILKLHAREIFDSRGNPTVEVDLYTNKGLFRAAVPSGASTGIYEALELRDNDKTRFLGKGVSKAVEHVNKTIAPALVNKKVNVVEQEKIDKLMLEMDGTENKSKFGANAILGVSLAVCKAGAAEKGVPLYRHIADLAGNEDVILPVPAFNVINGGSHAGNKLAMQEFMILPVGAENFKEAMRIGAEVYQNLKNVIKEKYGKDATNVGDEGGFAPNILENKEALELLKSAISKAGYTDKIVIGMDVAASEFYRDGKYDLDFKSPDDPSRYITPDQLSDLYKGFIKNYPVVSIEDPFDQHDWAAWKKFTASAGIQVVGDDLTVTNPRRITKAVEEKSCNCLLLKVNQIGSVTESLQACKLAQTNGWGVMVSHRSGETEDTFIADLVVGLCTGQIKTGAPCRSERLAKYNQILRIEEELGSKGRFAGRNFRNPRVN.

Residue Ser40 coordinates Mg(2+). Residues His158 and Glu167 each contribute to the substrate site. The active-site Proton donor is Glu210. 3 residues coordinate Mg(2+): Asp245, Glu293, and Asp318. The substrate site is built by Glu293 and Asp318. Residue Lys343 is the Proton acceptor of the active site. Residues 370–373 and Lys394 each bind substrate; that span reads SHRS.

This sequence belongs to the enolase family. Homodimer. The cofactor is Mg(2+).

The protein resides in the cytoplasm. The enzyme catalyses (2R)-2-phosphoglycerate = phosphoenolpyruvate + H2O. Its pathway is carbohydrate degradation; glycolysis; pyruvate from D-glyceraldehyde 3-phosphate: step 4/5. The protein is Alpha-enolase of Sceloporus undulatus (Eastern fence lizard).